Reading from the N-terminus, the 442-residue chain is tRNA modification GTPase MnmE (442 aa).

Arg21, Glu79, and Lys118 together coordinate (6S)-5-formyl-5,6,7,8-tetrahydrofolate. One can recognise a TrmE-type G domain in the interval 214–367 (GFKIAIVGKP…LKEELQNYLN (154 aa)). Asn224 lines the K(+) pocket. GTP is bound by residues 224–229 (NVGKSS), 243–249 (SDIAGTT), and 268–271 (DTAG). Ser228 serves as a coordination point for Mg(2+). K(+) contacts are provided by Ser243, Ile245, and Thr248. Residue Thr249 participates in Mg(2+) binding. Lys442 contributes to the (6S)-5-formyl-5,6,7,8-tetrahydrofolate binding site.

Belongs to the TRAFAC class TrmE-Era-EngA-EngB-Septin-like GTPase superfamily. TrmE GTPase family. As to quaternary structure, homodimer. Heterotetramer of two MnmE and two MnmG subunits. It depends on K(+) as a cofactor.

The protein resides in the cytoplasm. In terms of biological role, exhibits a very high intrinsic GTPase hydrolysis rate. Involved in the addition of a carboxymethylaminomethyl (cmnm) group at the wobble position (U34) of certain tRNAs, forming tRNA-cmnm(5)s(2)U34. The sequence is that of tRNA modification GTPase MnmE from Campylobacter jejuni subsp. jejuni serotype O:23/36 (strain 81-176).